The following is a 231-amino-acid chain: Protein N-terminal glutamine amidohydrolase (231 aa).

The disordered stretch occupies residues 1–21; the sequence is MADDRVAGGATPPPPPPPPPL. Over residues 11–21 the composition is skewed to pro residues; sequence TPPPPPPPPPL. Catalysis depends on residues Cys-33, His-89, and Asp-108.

It belongs to the NTAQ1 family. In terms of assembly, monomer.

It catalyses the reaction N-terminal L-glutaminyl-[protein] + H2O = N-terminal L-glutamyl-[protein] + NH4(+). In terms of biological role, mediates the side-chain deamidation of N-terminal glutamine residues to glutamate, an important step in N-end rule pathway of protein degradation. Conversion of the resulting N-terminal glutamine to glutamate renders the protein susceptible to arginylation, polyubiquitination and degradation as specified by the N-end rule. Does not act on substrates with internal or C-terminal glutamine and does not act on non-glutamine residues in any position. This Oryza sativa subsp. indica (Rice) protein is Protein N-terminal glutamine amidohydrolase.